Reading from the N-terminus, the 239-residue chain is 7-cyano-7-deazaguanine synthase (239 aa).

13–23 (FSGGQDSTTCL) contacts ATP. Zn(2+) contacts are provided by Cys192, Cys201, Cys204, and Cys207.

The protein belongs to the QueC family. Zn(2+) serves as cofactor.

It carries out the reaction 7-carboxy-7-deazaguanine + NH4(+) + ATP = 7-cyano-7-deazaguanine + ADP + phosphate + H2O + H(+). It functions in the pathway purine metabolism; 7-cyano-7-deazaguanine biosynthesis. In terms of biological role, catalyzes the ATP-dependent conversion of 7-carboxy-7-deazaguanine (CDG) to 7-cyano-7-deazaguanine (preQ(0)). This is 7-cyano-7-deazaguanine synthase from Shewanella sp. (strain MR-4).